The sequence spans 369 residues: Prenyltransferase malB (369 aa).

Glu-87 lines the substrate pocket. Residues Arg-100 and Tyr-189 each coordinate dimethylallyl diphosphate. Tyr-191 provides a ligand contact to substrate.

Belongs to the tryptophan dimethylallyltransferase family.

Its function is as follows. Prenyltransferase; part of the gene cluster that mediates the biosynthesis of malbrancheamide, a dichlorinated fungal indole alkaloid that belongs to a family of natural products containing a characteristic bicyclo[2.2.2]diazaoctane core. The first step of malbrancheamide biosynthesis involves coupling of L-proline and L-tryptophan by malG, a bimodular NRPS, to produce L-Pro-L-Trp aldehyde through reductive offloading. This compound undergoes spontaneous cyclization and dehydration to give a dienamine which is reverse prenylated at C-2 by malE. The other prenyltransferase present in the cluster, malB, displays modest activity, suggesting that may be a redundant gene in the pathway. Subsequently, a [4+2] Diels-Alder cyclo-addition catalyzed by the bifunctional enzyme malC forms the characteristic bicyclo[2.2.2]diazaoctane ring of premalbrancheamid. Finally, the flavin-dependent halogenase malA catalyzes the iterative dichlorination of the indole ring of premalbrancheamide to yield C-9 monochlorinated malbrancheamide B, C-8 monochlorinated isomalbrancheamide B, and dichlorinated malbrancheamide. MalA is also able to brominate premalbrancheamide at C-9 to yield malbrancheamide C, and, to a lesser extend, at C-8 to yield isomalbrancheamide C. Finally, malA can brominate C-9 monochlorinated malbrancheamide B at C-8 to yield malbrancheamide D, or C-8 monochlorinated isomalbrancheamide B at C-9 to produce isomalbrancheamide D. This Malbranchea aurantiaca protein is Prenyltransferase malB.